The chain runs to 443 residues: ATP-dependent protease ATPase subunit HslU (443 aa).

ATP contacts are provided by residues I18, 60–65, D256, E321, and R393; that span reads GVGKTE.

It belongs to the ClpX chaperone family. HslU subfamily. In terms of assembly, a double ring-shaped homohexamer of HslV is capped on each side by a ring-shaped HslU homohexamer. The assembly of the HslU/HslV complex is dependent on binding of ATP.

The protein resides in the cytoplasm. In terms of biological role, ATPase subunit of a proteasome-like degradation complex; this subunit has chaperone activity. The binding of ATP and its subsequent hydrolysis by HslU are essential for unfolding of protein substrates subsequently hydrolyzed by HslV. HslU recognizes the N-terminal part of its protein substrates and unfolds these before they are guided to HslV for hydrolysis. This Nitrosospira multiformis (strain ATCC 25196 / NCIMB 11849 / C 71) protein is ATP-dependent protease ATPase subunit HslU.